Consider the following 151-residue polypeptide: Lectin-like protein BA14k (151 aa).

A signal peptide spans 1-26; it reads MNIFKQTCVGAFAVIFGATSIAPTMA. The chain crosses the membrane as a helical span at residues 83–103; the sequence is GWWYPLAAFGAGAIIGGAVSQ.

This sequence belongs to the BA14k family.

Its subcellular location is the cell membrane. Functionally, has immunoglobulin-binding and hemagglutination properties, and can bind to mannose. Essential for virulence. May be involved in LPS biosynthesis or polysaccharide transport. The chain is Lectin-like protein BA14k from Brucella anthropi (strain ATCC 49188 / DSM 6882 / CCUG 24695 / JCM 21032 / LMG 3331 / NBRC 15819 / NCTC 12168 / Alc 37) (Ochrobactrum anthropi).